The primary structure comprises 343 residues: MDDNKTRALTAALGQIEKQFGKGAIMRLGDNQAMDIEAISTGSLTIDIALGIGGLPCGRVVEIYGPESSGKTTLTLQAIAEAQKMGKTCAFVDAEHALDPIYAGKLGVNIDDLLVSQPDTGEQALEICDMLVRSGAVDVVVVDSVAALTPKAEIEGDMGDSHVGLQARLMSQALRKLTGNIKRSNTLVIFINQIRMKIGVMFGSPETTTGGNALKFYASVRLDIRRIGAIKDGDEVVGNETRVKVVKNKVAPPFKQAEFQIMYGQGICKEAELIDLGVKQKLVEKAGAWYSYNGERIGQGKANVVKYLKEHTEMSNDIEQKLRAELLLKKTVKAEEPAKADEE.

65–72 (GPESSGKT) is a binding site for ATP.

This sequence belongs to the RecA family.

It is found in the cytoplasm. Can catalyze the hydrolysis of ATP in the presence of single-stranded DNA, the ATP-dependent uptake of single-stranded DNA by duplex DNA, and the ATP-dependent hybridization of homologous single-stranded DNAs. It interacts with LexA causing its activation and leading to its autocatalytic cleavage. This Pseudoalteromonas atlantica (strain T6c / ATCC BAA-1087) protein is Protein RecA.